Reading from the N-terminus, the 456-residue chain is MLNNTMSVVILAAGKGTRMYSDLPKVLHTLAGKPMVQHVIDAANELGASNVHLVYGHGGDLLKKTLSDDKLNWVLQAEQLGTGHAMQQAAPFFADDEDILMLYGDVPLIAVETLTRLREAKPQGGIGLLTVKLDDPTGYGRITRENGKVTGIVEHKDASDEQRQIQEINTGILIANGADLKRWLSKLNNNNAQGEYYITDIIAMAHHEGHEITAVHPTRISETDGVNNRLQLSRLERIYQAEQAEKLLLAGVMLRDPARFDLRGTLAHGRDVEIDTNVIIEGQVTLGHRVKIGTGCVIKNSVIGDDCEISPYSVVEDARLDAACTIGPFARLRPGAELLEGAHVGNFVEMKKARLGKGSKAGHLTYLGDAEIGDNVNIGAGTITCNYDGANKFKTIIGDDVFVGSDSQLVAPVTIGKGVTIAAGTTVTRDVAENELVLSRVPQVNKQGWQRPVKKK.

A pyrophosphorylase region spans residues 1-229; the sequence is MLNNTMSVVI…ISETDGVNNR (229 aa). Residues 11 to 14, Lys25, Gln76, 81 to 82, 103 to 105, Gly140, Glu154, Asn169, and Asn227 each bind UDP-N-acetyl-alpha-D-glucosamine; these read LAAG, GT, and YGD. Residue Asp105 participates in Mg(2+) binding. Asn227 is a binding site for Mg(2+). The segment at 230 to 250 is linker; the sequence is LQLSRLERIYQAEQAEKLLLA. The interval 251–456 is N-acetyltransferase; the sequence is GVMLRDPARF…QGWQRPVKKK (206 aa). UDP-N-acetyl-alpha-D-glucosamine contacts are provided by Arg333 and Lys351. His363 (proton acceptor) is an active-site residue. UDP-N-acetyl-alpha-D-glucosamine-binding residues include Tyr366 and Asn377. Acetyl-CoA is bound by residues Ala380, 386–387, Ser405, Ala423, and Arg440; that span reads NY.

In the N-terminal section; belongs to the N-acetylglucosamine-1-phosphate uridyltransferase family. The protein in the C-terminal section; belongs to the transferase hexapeptide repeat family. As to quaternary structure, homotrimer. The cofactor is Mg(2+).

It is found in the cytoplasm. The enzyme catalyses alpha-D-glucosamine 1-phosphate + acetyl-CoA = N-acetyl-alpha-D-glucosamine 1-phosphate + CoA + H(+). It catalyses the reaction N-acetyl-alpha-D-glucosamine 1-phosphate + UTP + H(+) = UDP-N-acetyl-alpha-D-glucosamine + diphosphate. It functions in the pathway nucleotide-sugar biosynthesis; UDP-N-acetyl-alpha-D-glucosamine biosynthesis; N-acetyl-alpha-D-glucosamine 1-phosphate from alpha-D-glucosamine 6-phosphate (route II): step 2/2. Its pathway is nucleotide-sugar biosynthesis; UDP-N-acetyl-alpha-D-glucosamine biosynthesis; UDP-N-acetyl-alpha-D-glucosamine from N-acetyl-alpha-D-glucosamine 1-phosphate: step 1/1. The protein operates within bacterial outer membrane biogenesis; LPS lipid A biosynthesis. Catalyzes the last two sequential reactions in the de novo biosynthetic pathway for UDP-N-acetylglucosamine (UDP-GlcNAc). The C-terminal domain catalyzes the transfer of acetyl group from acetyl coenzyme A to glucosamine-1-phosphate (GlcN-1-P) to produce N-acetylglucosamine-1-phosphate (GlcNAc-1-P), which is converted into UDP-GlcNAc by the transfer of uridine 5-monophosphate (from uridine 5-triphosphate), a reaction catalyzed by the N-terminal domain. The sequence is that of Bifunctional protein GlmU from Enterobacter sp. (strain 638).